The following is a 52-amino-acid chain: Defensin D2 (52 aa).

4 disulfide bridges follow: C8–C52, C19–C39, C25–C46, and C29–C48.

In terms of tissue distribution, distributed in the epidermal cell layer of leaves and in the subepidermal layer region of stems. Not in roots.

The protein resides in the secreted. It localises to the cell wall. Functionally, antimicrobial peptide. Active against Fusarium spp., Gram-positive and Gram-negative bacterial pathogens. This is Defensin D2 from Spinacia oleracea (Spinach).